Consider the following 369-residue polypeptide: Anhydro-N-acetylmuramic acid kinase (369 aa).

Glycine 12–aspartate 19 lines the ATP pocket.

This sequence belongs to the anhydro-N-acetylmuramic acid kinase family.

It catalyses the reaction 1,6-anhydro-N-acetyl-beta-muramate + ATP + H2O = N-acetyl-D-muramate 6-phosphate + ADP + H(+). Its pathway is amino-sugar metabolism; 1,6-anhydro-N-acetylmuramate degradation. The protein operates within cell wall biogenesis; peptidoglycan recycling. Catalyzes the specific phosphorylation of 1,6-anhydro-N-acetylmuramic acid (anhMurNAc) with the simultaneous cleavage of the 1,6-anhydro ring, generating MurNAc-6-P. Is required for the utilization of anhMurNAc either imported from the medium or derived from its own cell wall murein, and thus plays a role in cell wall recycling. The polypeptide is Anhydro-N-acetylmuramic acid kinase (Shewanella amazonensis (strain ATCC BAA-1098 / SB2B)).